A 249-amino-acid chain; its full sequence is Triosephosphate isomerase (249 aa).

Residue 9–11 (NWK) participates in substrate binding. His-94 functions as the Electrophile in the catalytic mechanism. The active-site Proton acceptor is the Glu-166. Substrate-binding positions include Gly-172, Ser-211, and 232-233 (GG).

It belongs to the triosephosphate isomerase family. As to quaternary structure, homodimer.

The protein localises to the cytoplasm. It catalyses the reaction D-glyceraldehyde 3-phosphate = dihydroxyacetone phosphate. The protein operates within carbohydrate biosynthesis; gluconeogenesis. It functions in the pathway carbohydrate degradation; glycolysis; D-glyceraldehyde 3-phosphate from glycerone phosphate: step 1/1. In terms of biological role, involved in the gluconeogenesis. Catalyzes stereospecifically the conversion of dihydroxyacetone phosphate (DHAP) to D-glyceraldehyde-3-phosphate (G3P). The protein is Triosephosphate isomerase of Chromohalobacter salexigens (strain ATCC BAA-138 / DSM 3043 / CIP 106854 / NCIMB 13768 / 1H11).